A 322-amino-acid chain; its full sequence is Ribonuclease Z (322 aa).

His62, His64, Asp66, His67, His143, Asp215, and His273 together coordinate Zn(2+). The active-site Proton acceptor is the Asp66. Over residues 300–314 (ELRRYELDPREKEPD) the composition is skewed to basic and acidic residues. The disordered stretch occupies residues 300 to 322 (ELRRYELDPREKEPDPVGPADES).

This sequence belongs to the RNase Z family. As to quaternary structure, homodimer. Requires Zn(2+) as cofactor.

The enzyme catalyses Endonucleolytic cleavage of RNA, removing extra 3' nucleotides from tRNA precursor, generating 3' termini of tRNAs. A 3'-hydroxy group is left at the tRNA terminus and a 5'-phosphoryl group is left at the trailer molecule.. Its function is as follows. Zinc phosphodiesterase, which displays some tRNA 3'-processing endonuclease activity. Probably involved in tRNA maturation, by removing a 3'-trailer from precursor tRNA. This chain is Ribonuclease Z, found in Salinibacter ruber (strain DSM 13855 / M31).